A 392-amino-acid polypeptide reads, in one-letter code: Elongation factor Tu (392 aa).

A tr-type G domain is found at 10–202; sequence KVHVNVGTIG…VLDEYIEDPI (193 aa). Residues 19–26 are G1; that stretch reads GHVDHGKT. 19–26 is a GTP binding site; sequence GHVDHGKT. A Mg(2+)-binding site is contributed by T26. Residues 60–64 are G2; that stretch reads GITIN. A G3 region spans residues 81 to 84; that stretch reads DCPG. GTP-binding positions include 81–85 and 136–139; these read DCPGH and NKCD. Residues 136-139 are G4; that stretch reads NKCD. Residues 174-176 are G5; sequence SAL.

This sequence belongs to the TRAFAC class translation factor GTPase superfamily. Classic translation factor GTPase family. EF-Tu/EF-1A subfamily. In terms of assembly, monomer.

The protein resides in the cytoplasm. The catalysed reaction is GTP + H2O = GDP + phosphate + H(+). Functionally, GTP hydrolase that promotes the GTP-dependent binding of aminoacyl-tRNA to the A-site of ribosomes during protein biosynthesis. This chain is Elongation factor Tu, found in Phytoplasma mali (strain AT).